A 947-amino-acid polypeptide reads, in one-letter code: Bifunctional glutamine synthetase adenylyltransferase/adenylyl-removing enzyme (947 aa).

The segment at Met-1 to Glu-440 is adenylyl removase. The tract at residues Ser-450 to Val-947 is adenylyl transferase.

Belongs to the GlnE family. It depends on Mg(2+) as a cofactor.

The catalysed reaction is [glutamine synthetase]-O(4)-(5'-adenylyl)-L-tyrosine + phosphate = [glutamine synthetase]-L-tyrosine + ADP. It catalyses the reaction [glutamine synthetase]-L-tyrosine + ATP = [glutamine synthetase]-O(4)-(5'-adenylyl)-L-tyrosine + diphosphate. Involved in the regulation of glutamine synthetase GlnA, a key enzyme in the process to assimilate ammonia. When cellular nitrogen levels are high, the C-terminal adenylyl transferase (AT) inactivates GlnA by covalent transfer of an adenylyl group from ATP to specific tyrosine residue of GlnA, thus reducing its activity. Conversely, when nitrogen levels are low, the N-terminal adenylyl removase (AR) activates GlnA by removing the adenylyl group by phosphorolysis, increasing its activity. The regulatory region of GlnE binds the signal transduction protein PII (GlnB) which indicates the nitrogen status of the cell. This chain is Bifunctional glutamine synthetase adenylyltransferase/adenylyl-removing enzyme, found in Salmonella agona (strain SL483).